The sequence spans 1578 residues: E3 ubiquitin-protein ligase HECW2 (1578 aa).

Ser48 is subject to Phosphoserine. The C2 domain occupies Met171–Leu298. Disordered stretches follow at residues His341–Asp453 and Ile496–Arg802. Polar residues predominate over residues Arg386–Ser406. Residues Ala518 to Asn532 are compositionally biased toward basic and acidic residues. A compositionally biased stretch (polar residues) spans Ser559–Pro576. Over residues Thr577–Arg593 the composition is skewed to low complexity. Composition is skewed to polar residues over residues Glu597–Thr614, Ser643–Glu664, and Pro688–Pro708. Composition is skewed to low complexity over residues Ala721 to Glu735, Ala746 to Ala755, and Ala769 to Gly782. Positions Trp737–Val1074 are interaction with TP73. Residues Glu813 to Ala846 form the WW 1 domain. Residues Leu853–Arg880 adopt a coiled-coil conformation. Ser858 and Ser915 each carry phosphoserine. Positions Leu991–Leu1024 constitute a WW 2 domain. Disordered stretches follow at residues Arg1030 to Ser1075 and Cys1167 to Ala1193. Residues His1037 to Ser1046 show a composition bias toward basic residues. Residues Cys1167–Ala1187 are compositionally biased toward polar residues. Ser1181 bears the Phosphoserine mark. The 336-residue stretch at Ser1243–Glu1578 folds into the HECT domain. Catalysis depends on Cys1546, which acts as the Glycyl thioester intermediate.

Interacts with TP73. Interacts with FZR1.

Its subcellular location is the cytoplasm. The protein resides in the cytoskeleton. The protein localises to the spindle. It catalyses the reaction S-ubiquitinyl-[E2 ubiquitin-conjugating enzyme]-L-cysteine + [acceptor protein]-L-lysine = [E2 ubiquitin-conjugating enzyme]-L-cysteine + N(6)-ubiquitinyl-[acceptor protein]-L-lysine.. It functions in the pathway protein modification; protein ubiquitination. In terms of biological role, E3 ubiquitin-protein ligase that mediates ubiquitination of TP73. Acts to stabilize TP73 and enhance activation of transcription by TP73. Involved in the regulation of mitotic metaphase/anaphase transition. In Mus musculus (Mouse), this protein is E3 ubiquitin-protein ligase HECW2 (Hecw2).